The sequence spans 1314 residues: Condensin-2 complex subunit CAP-D3 (1314 aa).

HEAT repeat units follow at residues 20–58 (ESDY…SFLR), 98–136 (PIAF…KKRG), 184–222 (KSLV…GVLN), 231–267 (TAAE…SLAK), 269–310 (NPEL…AMEV), 331–360 (RVLA…GLKD), 361–398 (SWGL…FLSG), 417–455 (SEGK…LMGG), 457–493 (FDGS…ICTD), and 494–532 (EIVT…ERIL). Residues 116-150 (DDSAGQGSNSQREKGNKKKRGRGKRNLGYEDGEET) are disordered. A compositionally biased stretch (basic residues) spans 130–140 (GNKKKRGRGKR). The short motif at 789 to 796 (SRRSKRLD) is the Nuclear localization signal element. 6 HEAT repeats span residues 821 to 859 (SADT…KQKA), 878 to 916 (GKLA…VHYT), 917 to 954 (AMIE…RDYV), 956 to 992 (WRGV…VKAP), 1053 to 1091 (QMAP…SVLQ), and 1138 to 1179 (KGLI…DYKN). Disordered stretches follow at residues 1210–1237 (MANQ…ENVR) and 1265–1314 (VNGG…DDES).

Component of the condensin-2 complex. In terms of tissue distribution, present in buds.

Its subcellular location is the nucleus. It localises to the chromosome. In terms of biological role, regulatory subunit of the condensin-2 complex, a complex which establishes mitotic chromosome architecture and is involved in physical rigidity of the chromatid axis. May promote the resolution of double-strand DNA catenanes (intertwines) between sister chromatids. Required for plant vigor, fertility, chromatin condensation and sister chromatid cohesion both during mitosis and meiosis. Necessary to maintain normal structural integrity of the meiotic chromosomes during the two nuclear divisions of gametogenesis, especially to prevent interchromosome connections at metaphase I. Seems also involved in crossover formation during meiotic prophase I. Prevents centromeric and pericentromeric heterochromatin repeats association. The protein is Condensin-2 complex subunit CAP-D3 of Arabidopsis thaliana (Mouse-ear cress).